We begin with the raw amino-acid sequence, 1182 residues long: WD repeat-containing protein on Y chromosome (1182 aa).

8 WD repeats span residues 155 to 199, 323 to 362, 366 to 405, 456 to 495, 508 to 547, 595 to 635, 740 to 779, and 823 to 862; these read EEIT…LRSA, RIPLGVSVFYVSEIKNILVTGGPDTFVRIWDVYISSEPSA, GHNGGIVAVFVQPEENKVYSVDYHKIIKVWDLQEHTLLQT, THAAPVSVVLYNRLFRNIVTCGLDSYIIVWDPWTGRRKII, TIDIEITAACFDPLEQFLLTGARDGSLKIWNYNNAVVVRN, FHTD…RRYN, KTGDCVLTMATDRKNRFLYTGTAFGYIKVWHIVNYCIPKA, and GHLKAINSIGFINLPKIIFSGSHDYSCRLWTQGGRYLGTL. The interval 1031–1182 is disordered; it reads TKAGANLDQP…PKAKTDRETH (152 aa). Low complexity-rich tracts occupy residues 1079–1092 and 1103–1121; these read GVSSGYGKVSVSQG and TTSLSKPKTSSSPSKPKGS.

The polypeptide is WD repeat-containing protein on Y chromosome (Drosophila virilis (Fruit fly)).